A 271-amino-acid chain; its full sequence is Putative phosphoenolpyruvate synthase regulatory protein (271 aa).

151–158 contacts ADP; sequence GVSRSGKT.

Belongs to the pyruvate, phosphate/water dikinase regulatory protein family. PSRP subfamily.

The catalysed reaction is [pyruvate, water dikinase] + ADP = [pyruvate, water dikinase]-phosphate + AMP + H(+). It catalyses the reaction [pyruvate, water dikinase]-phosphate + phosphate + H(+) = [pyruvate, water dikinase] + diphosphate. In terms of biological role, bifunctional serine/threonine kinase and phosphorylase involved in the regulation of the phosphoenolpyruvate synthase (PEPS) by catalyzing its phosphorylation/dephosphorylation. The sequence is that of Putative phosphoenolpyruvate synthase regulatory protein from Burkholderia orbicola (strain MC0-3).